The primary structure comprises 1071 residues: ATP-dependent helicase/deoxyribonuclease subunit B (1071 aa).

It belongs to the helicase family. AddB/RexB type 2 subfamily. Heterodimer of AddA and RexB. It depends on Mg(2+) as a cofactor.

Functionally, the heterodimer acts as both an ATP-dependent DNA helicase and an ATP-dependent, dual-direction single-stranded exonuclease. Recognizes the chi site generating a DNA molecule suitable for the initiation of homologous recombination. This subunit has 5' -&gt; 3' nuclease activity but not helicase activity. This Streptococcus pyogenes serotype M4 (strain MGAS10750) protein is ATP-dependent helicase/deoxyribonuclease subunit B.